Here is a 205-residue protein sequence, read N- to C-terminus: Shieldin complex subunit 1 (205 aa).

In terms of assembly, component of the shieldin complex, consisting of SHLD1, SHLD2, SHLD3 and MAD2L2/REV7. Within the complex, SHLD2 forms a scaffold which interacts with a SHLD3-MAD2L2 subcomplex via its N-terminus, and with SHLD1 via its C-terminus. Interacts with ASTE1.

The protein resides in the chromosome. Functionally, component of the shieldin complex, which plays an important role in repair of DNA double-stranded breaks (DSBs). During G1 and S phase of the cell cycle, the complex functions downstream of TP53BP1 to promote non-homologous end joining (NHEJ) and suppress DNA end resection. Mediates various NHEJ-dependent processes including immunoglobulin class-switch recombination, and fusion of unprotected telomeres. The protein is Shieldin complex subunit 1 of Homo sapiens (Human).